We begin with the raw amino-acid sequence, 342 residues long: tRNA-specific 2-thiouridylase MnmA (342 aa).

Residues 6–13 and Leu32 each bind ATP; that span reads LLSGGVDS. The active-site Nucleophile is the Cys92. Cys92 and Cys191 form a disulfide bridge. Residue Gly116 coordinates ATP. The tract at residues 138 to 140 is interaction with tRNA; sequence KDQ. Cys191 acts as the Cysteine persulfide intermediate in catalysis. An interaction with tRNA region spans residues 293–294; the sequence is RY.

The protein belongs to the MnmA/TRMU family.

Its subcellular location is the cytoplasm. The enzyme catalyses S-sulfanyl-L-cysteinyl-[protein] + uridine(34) in tRNA + AH2 + ATP = 2-thiouridine(34) in tRNA + L-cysteinyl-[protein] + A + AMP + diphosphate + H(+). Catalyzes the 2-thiolation of uridine at the wobble position (U34) of tRNA, leading to the formation of s(2)U34. The sequence is that of tRNA-specific 2-thiouridylase MnmA from Helicobacter pylori (strain G27).